The sequence spans 932 residues: DNA mismatch repair protein MutS (932 aa).

Position 615–622 (615–622 (GPNMAGKS)) interacts with ATP.

The protein belongs to the DNA mismatch repair MutS family.

This protein is involved in the repair of mismatches in DNA. It is possible that it carries out the mismatch recognition step. This protein has a weak ATPase activity. The sequence is that of DNA mismatch repair protein MutS from Clostridium botulinum (strain Kyoto / Type A2).